We begin with the raw amino-acid sequence, 289 residues long: ATP synthase subunit a (289 aa).

6 helical membrane passes run 43–63, 103–123, 160–180, 193–213, 232–252, and 259–279; these read AFHL…LLIF, VIAP…AVDL, FCVF…GGFI, IFVQ…TLIA, VFIL…GLGV, and AVFH…LTIV.

It belongs to the ATPase A chain family. F-type ATPases have 2 components, CF(1) - the catalytic core - and CF(0) - the membrane proton channel. CF(1) has five subunits: alpha(3), beta(3), gamma(1), delta(1), epsilon(1). CF(0) has three main subunits: a(1), b(2) and c(9-12). The alpha and beta chains form an alternating ring which encloses part of the gamma chain. CF(1) is attached to CF(0) by a central stalk formed by the gamma and epsilon chains, while a peripheral stalk is formed by the delta and b chains.

Its subcellular location is the cell inner membrane. In terms of biological role, key component of the proton channel; it plays a direct role in the translocation of protons across the membrane. The protein is ATP synthase subunit a of Pseudomonas putida (strain ATCC 700007 / DSM 6899 / JCM 31910 / BCRC 17059 / LMG 24140 / F1).